Here is a 254-residue protein sequence, read N- to C-terminus: Coproheme decarboxylase (254 aa).

Fe-coproporphyrin III is bound by residues Arg136, 150–154, His177, Gln190, and Ser228; that span reads YPMDK. The active site involves Tyr150.

Belongs to the ChdC family. Type 1 subfamily. Fe-coproporphyrin III serves as cofactor.

It catalyses the reaction Fe-coproporphyrin III + 2 H2O2 + 2 H(+) = heme b + 2 CO2 + 4 H2O. The catalysed reaction is Fe-coproporphyrin III + H2O2 + H(+) = harderoheme III + CO2 + 2 H2O. It carries out the reaction harderoheme III + H2O2 + H(+) = heme b + CO2 + 2 H2O. It participates in porphyrin-containing compound metabolism; protoheme biosynthesis. Its function is as follows. Involved in coproporphyrin-dependent heme b biosynthesis. Catalyzes the decarboxylation of Fe-coproporphyrin III (coproheme) to heme b (protoheme IX), the last step of the pathway. The reaction occurs in a stepwise manner with a three-propionate intermediate. This Bacillus licheniformis (strain ATCC 14580 / DSM 13 / JCM 2505 / CCUG 7422 / NBRC 12200 / NCIMB 9375 / NCTC 10341 / NRRL NRS-1264 / Gibson 46) protein is Coproheme decarboxylase.